The primary structure comprises 60 residues: uncharacterized protein (60 aa).

This is an uncharacterized protein from Autographa californica nuclear polyhedrosis virus (AcMNPV).